A 461-amino-acid polypeptide reads, in one-letter code: GTPase Der (461 aa).

EngA-type G domains lie at 2–164 and 197–368; these read QKII…EDDV and IRVG…KNFT. Residues 8-15, 55-59, 116-119, 203-210, 250-254, and 314-317 contribute to the GTP site; these read GKPNVGKS, DSGGL, NKID, GRVNVGKS, DTAGI, and NKWD. A KH-like domain is found at 369–453; it reads QKIQTSKLNE…PIVLAPKKRG (85 aa).

It belongs to the TRAFAC class TrmE-Era-EngA-EngB-Septin-like GTPase superfamily. EngA (Der) GTPase family. As to quaternary structure, associates with the 50S ribosomal subunit.

In terms of biological role, GTPase that plays an essential role in the late steps of ribosome biogenesis. The protein is GTPase Der of Campylobacter curvus (strain 525.92).